The primary structure comprises 416 residues: Exodeoxyribonuclease 7 large subunit (416 aa).

The interval Met1–Val21 is disordered.

It belongs to the XseA family. As to quaternary structure, heterooligomer composed of large and small subunits.

It is found in the cytoplasm. The enzyme catalyses Exonucleolytic cleavage in either 5'- to 3'- or 3'- to 5'-direction to yield nucleoside 5'-phosphates.. Bidirectionally degrades single-stranded DNA into large acid-insoluble oligonucleotides, which are then degraded further into small acid-soluble oligonucleotides. This is Exodeoxyribonuclease 7 large subunit from Deinococcus radiodurans (strain ATCC 13939 / DSM 20539 / JCM 16871 / CCUG 27074 / LMG 4051 / NBRC 15346 / NCIMB 9279 / VKM B-1422 / R1).